Reading from the N-terminus, the 84-residue chain is uncharacterized protein (84 aa).

This is an uncharacterized protein from Vaccinia virus (strain Copenhagen) (VACV).